The primary structure comprises 154 residues: 6,7-dimethyl-8-ribityllumazine synthase (154 aa).

5-amino-6-(D-ribitylamino)uracil is bound by residues phenylalanine 22, 56–58, and 80–82; these read AFE and TVI. 85 to 86 is a binding site for (2S)-2-hydroxy-3-oxobutyl phosphate; it reads AT. Histidine 88 (proton donor) is an active-site residue. Phenylalanine 113 contributes to the 5-amino-6-(D-ribitylamino)uracil binding site. (2S)-2-hydroxy-3-oxobutyl phosphate is bound at residue arginine 127.

It belongs to the DMRL synthase family. Forms an icosahedral capsid composed of 60 subunits, arranged as a dodecamer of pentamers.

It carries out the reaction (2S)-2-hydroxy-3-oxobutyl phosphate + 5-amino-6-(D-ribitylamino)uracil = 6,7-dimethyl-8-(1-D-ribityl)lumazine + phosphate + 2 H2O + H(+). Its pathway is cofactor biosynthesis; riboflavin biosynthesis; riboflavin from 2-hydroxy-3-oxobutyl phosphate and 5-amino-6-(D-ribitylamino)uracil: step 1/2. Catalyzes the formation of 6,7-dimethyl-8-ribityllumazine by condensation of 5-amino-6-(D-ribitylamino)uracil with 3,4-dihydroxy-2-butanone 4-phosphate. This is the penultimate step in the biosynthesis of riboflavin. In Bacillus licheniformis (strain ATCC 14580 / DSM 13 / JCM 2505 / CCUG 7422 / NBRC 12200 / NCIMB 9375 / NCTC 10341 / NRRL NRS-1264 / Gibson 46), this protein is 6,7-dimethyl-8-ribityllumazine synthase.